We begin with the raw amino-acid sequence, 695 residues long: IQ domain-containing protein E (695 aa).

A disordered region spans residues 29–55 (KAKRKAFHKPPPTSPKSPYLSKPRKVA). Coiled coils occupy residues 157–264 (LHVQ…RLQT), 292–358 (SALL…SSKS), and 387–477 (NKDH…CPEV). Serine 322 carries the phosphoserine modification. Disordered stretches follow at residues 357 to 390 (KSHAAEPVRSHPPACLASSSALHRQPRGDRNKDH), 465 to 521 (EMKK…RRDA), 564 to 599 (ASKAHGSEPPSVPGLPDQSSPVPRVPSPIAQATGSP), and 618 to 695 (RARH…NFPV). Positions 465–482 (EMKKEEKEDCPEVPHKAQ) are enriched in basic and acidic residues. IQ domains lie at 542–571 (LDEAAVVLQAAFRGHLTRTKLLASKAHGSE) and 601–630 (QEEAIVIIQSALRAHLARARHSATGKRTTT).

As to quaternary structure, component of the EvC complex composed of EFCAB7, IQCE, EVC2 and EVC; built from two subcomplexes, EVC2:EVC and EFCAB7:IQCE. Interacts (via N-terminus) with EFCAB7 (via EF-hands 1 and 2); this interaction anchors the EVC-EVC2 complex in a signaling microdomain at the base of cilia and stimulates the Hedgehog (Hh) pathway. Interacts with EVC2 (via N-terminal end). Interacts with EVC.

It localises to the cell projection. It is found in the cilium membrane. In terms of biological role, component of the EvC complex that positively regulates ciliary Hedgehog (Hh) signaling. Required for proper limb morphogenesis. The protein is IQ domain-containing protein E (IQCE) of Homo sapiens (Human).